A 369-amino-acid chain; its full sequence is Putative 2-aminoethylphosphonate import ATP-binding protein PhnT (369 aa).

In terms of domain architecture, ABC transporter spans 19–250 (IVLDSLRVAY…PPNRFAAEFL (232 aa)). 51–58 (GPSGSGKT) contributes to the ATP binding site.

Belongs to the ABC transporter superfamily. 2-aminoethylphosphonate importer (TC 3.A.1.11.5) family.

The protein localises to the cell inner membrane. Probably part of the PhnSTUV complex (TC 3.A.1.11.5) involved in 2-aminoethylphosphonate import. Probably responsible for energy coupling to the transport system. The protein is Putative 2-aminoethylphosphonate import ATP-binding protein PhnT (phnT) of Salmonella typhimurium (strain LT2 / SGSC1412 / ATCC 700720).